Reading from the N-terminus, the 70-residue chain is uncharacterized protein (70 aa).

Residues 15–37 (LLVSSISESAVALIIITIRILFS) form a helical membrane-spanning segment.

It localises to the membrane. This is an uncharacterized protein from Saccharomyces cerevisiae (strain ATCC 204508 / S288c) (Baker's yeast).